Here is a 277-residue protein sequence, read N- to C-terminus: Large ribosomal subunit protein uL2 (277 aa).

A disordered region spans residues 222 to 277 (GSVMNPNDHPHGGGEGKAPVGRKAPSTPWGKPALGLKTRNKKAKSDKLIVRRRNEK). Residues 264 to 277 (AKSDKLIVRRRNEK) are compositionally biased toward basic and acidic residues.

Belongs to the universal ribosomal protein uL2 family. In terms of assembly, part of the 50S ribosomal subunit. Forms a bridge to the 30S subunit in the 70S ribosome.

In terms of biological role, one of the primary rRNA binding proteins. Required for association of the 30S and 50S subunits to form the 70S ribosome, for tRNA binding and peptide bond formation. It has been suggested to have peptidyltransferase activity; this is somewhat controversial. Makes several contacts with the 16S rRNA in the 70S ribosome. This chain is Large ribosomal subunit protein uL2, found in Streptococcus thermophilus (strain CNRZ 1066).